An 856-amino-acid polypeptide reads, in one-letter code: MASSGSIQIPRRLPLLLTHEGVLLPGSTMRTSVDTPGNMELVQNRLLRGTSLKSTIIGVVPNTSDPSSDREELPSLHRIGTAALAVQVVGSNWPKPHYTLLVTGLCRFQITEILKERPYPVAEVEQLDRLEQLSSKEEFKEALGDLSEQFYKYAVQLVDMLDNSVPAVAKLKRLLNNLPKELLPDVLTSIIRTTNEEKLQILDAVSLEERFKVTIPLLLRQIEGLKLLQKTRNPKQDDDKRIVAIRPPRKLGNISSKSFSLENTDDDDEDSDDIIILERKIKSSNMPEPALKVCVKEIKRLKKMPQSMPEYALTRNYLELMSELPWSKTTRDRLDIRAARILLDNDHYAMAKLKKRVLEYLAVRQLKNNLKGPILCFVGPPGVGKTSVGRSIAKTLGREFHRIALGGVCDQSDIRGHRRTYVGSMPGRIINGLKIVGVNNPVFLLDEVDKLGKSLQGDPAAALLEVLDPEQNHNFTDHYLNVAFDLSQVLFIATANTTATIPPALLDRMEVLEVPGYSQEEKLEIAHRHLISKQLAQHGLTPEQIQIPQEATLEIITRYTREAGVRSLDRKLGAICRAVAVKVAEGQHREHKSEHLEAPEGEERKESVPEGSKSATINDTADFALPPEMPILIDHHALKDILGPPMYETEVFGRLNQPGVAIGLAWTPLGGEIMFVEASRMDGEGQLTLTGQLGDVMKESAHLAISWLRSNAKKYQLTNASGSFDLLDNTDIHLHFPAGAVTKDGPSAGVAIVTCLASLFSGRLVCSDVAMTGEITLRGLVLPVGGIKDKVLAAHRAGLKRVILPKRNETDLEEIPLNVRQDLEFVLAGSLDEVLNAAFDGGFSLKTTPDLLNSKL.

The Lon N-terminal domain maps to 13–222; the sequence is LPLLLTHEGV…VTIPLLLRQI (210 aa). 379-386 serves as a coordination point for ATP; that stretch reads GPPGVGKT. A compositionally biased stretch (basic and acidic residues) spans 586-608; the sequence is GQHREHKSEHLEAPEGEERKESV. Residues 586 to 614 form a disordered region; that stretch reads GQHREHKSEHLEAPEGEERKESVPEGSKS. The Lon proteolytic domain maps to 655-841; sequence LNQPGVAIGL…DEVLNAAFDG (187 aa). Active-site residues include serine 747 and lysine 790. The Microbody targeting signal signature appears at 854–856; the sequence is SKL.

The protein belongs to the peptidase S16 family.

The protein resides in the peroxisome matrix. The enzyme catalyses Hydrolysis of proteins in presence of ATP.. Functionally, ATP-dependent serine protease that mediates the selective degradation of misfolded and unassembled polypeptides in the peroxisomal matrix. Necessary for type 2 peroxisome targeting signal (PTS2)-containing protein processing and facilitates peroxisome matrix protein import. The sequence is that of Lon protease homolog 2, peroxisomal (lonp2) from Xenopus laevis (African clawed frog).